The sequence spans 636 residues: uncharacterized protein (636 aa).

The segment at residues 10–36 (CLACRRKKVKCNRQYPCTRCLKYGEAC) is a DNA-binding region (zn(2)-C6 fungal-type). A compositionally biased stretch (polar residues) spans 556 to 580 (NSQSTSEFVSPISDTENGSSSQQVS). The interval 556 to 581 (NSQSTSEFVSPISDTENGSSSQQVSE) is disordered.

It is found in the cytoplasm. The protein resides in the nucleus. This is an uncharacterized protein from Schizosaccharomyces pombe (strain 972 / ATCC 24843) (Fission yeast).